The chain runs to 939 residues: Tyrosine-protein kinase Shark (939 aa).

Positions 10-106 (WYHGNLSREA…GLPTKLTVPL (97 aa)) constitute an SH2 1 domain. ANK repeat units follow at residues 153–185 (DGQT…SSDS), 186–218 (FGCQ…GRNI), and 220–252 (NGYV…PRTS). An SH2 2 domain is found at 288–403 (WYHGTLTREE…GLPVSLKYPV (116 aa)). Disordered regions lie at residues 410–446 (EVPS…QHPH) and 476–505 (ALFD…SLAG). Positions 496 to 505 (ESSVSGSLAG) are enriched in polar residues. The 260-residue stretch at 662–921 (LVLDREIGHG…PTFVYLTEFF (260 aa)) folds into the Protein kinase domain. ATP contacts are provided by residues 668-676 (IGHGEFGSV) and Lys-698. Asp-789 (proton acceptor) is an active-site residue. Tyr-927 is subject to Phosphotyrosine.

It belongs to the protein kinase superfamily. Tyr protein kinase family. As to quaternary structure, interacts with drpr; this is required for the recruitment of drpr and glial cells to severed axons and for the phagocytosis of axonal debris by glial cells following axon injury. Gastrulation embryos show expression in ectodermal cells along the cephalic furrow and ventral midline. Proctodeum, stomodeum and their derived structures (foregut, atrium, pharynx, esophagus and hindgut) continue to show expression from stage 8-9 to late embryos. Other ectodermally derived structures (frontal sac, salivary gland and labium) and developing tracheal system also show expression.

It is found in the cytoplasm. The catalysed reaction is L-tyrosyl-[protein] + ATP = O-phospho-L-tyrosyl-[protein] + ADP + H(+). Its function is as follows. Following axon injury, required for recruitment of drpr and glial cells to severed axons and for glial clearance of severed axons from the central nervous system. Together with Src42a and drpr, promotes the migration of macrophages to sites of wounding as part of a signaling cascade where Scr42a detects production of hydrogen peroxide at wound sites which triggers phosphorylation of drpr and subsequent recruitment and activation of shark. May be involved in signal transduction on the apical surface of ectodermal epithelial cells, regulating their polarity during invagination. Crumbs (crb) may be the intracellular signal. The polypeptide is Tyrosine-protein kinase Shark (Drosophila melanogaster (Fruit fly)).